Reading from the N-terminus, the 1048-residue chain is FERM, ARHGEF and pleckstrin domain-containing protein 1 (1048 aa).

Positions 1-37 (MGEIEQKPTPASRLGAPENSGISTLERGQKPPPTPSG) are disordered. S20 and S23 each carry phosphoserine. Position 24 is a phosphothreonine (T24). Residues 40-320 (MTVKIQMLDD…EHHAFFRLFE (281 aa)) enclose the FERM domain. 7 positions are modified to phosphoserine: S340, S373, S389, S403, S427, S433, and S437. Positions 361–536 (FERKHSKIHS…TDDEEEGRRK (176 aa)) are disordered. The segment covering 371 to 395 (TRSLVSQPTAPNSEVPKQSPQSASL) has biased composition (polar residues). 2 stretches are compositionally biased toward polar residues: residues 472–491 (STGSLTGSPHLSELSINSQG) and 498–513 (VTLSPNLSPDNKQASP). Phosphoserine is present on residues S512 and S516. Positions 542–733 (KAYYIAKEVS…TEMVAQLHGT (192 aa)) constitute a DH domain. Residues 762–859 (EFIRLGSLSK…WMEDIQMAID (98 aa)) enclose the PH 1 domain. A phosphoserine mark is found at S836, S875, and S881. The tract at residues 865–907 (NGPTPELLASSPPDNKSPDEATAADQESEDDLSASRTSLERQA) is disordered. T886 is modified (phosphothreonine). Phosphoserine is present on residues S892, S899, and S902. In terms of domain architecture, PH 2 spans 935–1032 (ENQLSGNLLR…WMEVIRSATS (98 aa)).

In terms of assembly, interacts with CADM1. Interacts with RAC1. Detected in brain cortex, hippocampus, striatum, olfactory bulb, cerebellum and hindbrain (at protein level).

The protein localises to the cell membrane. Its subcellular location is the synapse. It localises to the synaptosome. It is found in the cytoplasm. The protein resides in the cytosol. The protein localises to the cell projection. Its subcellular location is the filopodium. It localises to the dendrite. It is found in the dendritic spine. Functionally, functions as a guanine nucleotide exchange factor for RAC1. May play a role in semaphorin signaling. Plays a role in the assembly and disassembly of dendritic filopodia, the formation of dendritic spines, regulation of dendrite length and ultimately the formation of synapses. The protein is FERM, ARHGEF and pleckstrin domain-containing protein 1 (Farp1) of Mus musculus (Mouse).